The following is a 167-amino-acid chain: NADH-ubiquinone oxidoreductase chain 6 (167 aa).

4 helical membrane passes run 24–44 (PYFGALGLIVVSLVGCLIILA), 54–74 (LLLIYLGGMMVVFSYCTALVL), 85–105 (VLMKMALGVLVVVFLGYGGYL), and 135–155 (WLLIVFGCLGLFLALLVILEI).

The protein belongs to the complex I subunit 6 family.

The protein localises to the mitochondrion membrane. It carries out the reaction a ubiquinone + NADH + 5 H(+)(in) = a ubiquinol + NAD(+) + 4 H(+)(out). Core subunit of the mitochondrial membrane respiratory chain NADH dehydrogenase (Complex I) that is believed to belong to the minimal assembly required for catalysis. Complex I functions in the transfer of electrons from NADH to the respiratory chain. The immediate electron acceptor for the enzyme is believed to be ubiquinone. In Myxine glutinosa (Atlantic hagfish), this protein is NADH-ubiquinone oxidoreductase chain 6 (MT-ND6).